The chain runs to 913 residues: MRPRSGGRPGAPGRRRRRLRRGPRGRRLPPPPPLPLLLGLLLAAAGPGAARAKETAFVEVVLFESSPSGDYTTHTTGLTGRFSRAGAMLSAEGEIVQMHPLGLCNNNDEEDLYEYGWVGVVKLEQPELDPKPCLTVLGKAKRAVQRGATAVIFDVSENPEAIDQLNQGSEDPLKRPVVYVKGADAIKLMNIVNKQKVARARIQHLPPRQPTEYFDMGIFLAFFVVVSLVCLILLVKIKLKQRRSQNSMNRLAVQALEKMETRKFNSKSKGRREGSCGALDTLSSGSTSDCAICLEKYIDGEELRVIPCTHRFHRKCVDPWLLQHHTCPHCRHNIIEQKGNPGAVCVETSNLTRGRQPRVTLPVHYPGRVHRTNAIPAYPTRTSMDSHGNPVTLLTMDRHGEQNLYSPQTPTYVRGYPPLHLDHTLAPHRCSLEHRAYSPAHPFRRPKFSSRSFSKAACFSQYETMYQHYYFQGLSYPEQEGQTIPSVTPRGQSRAFPPSGASSLLFPTMVHVAPPTHVESGSTSSFSCYHGHRSVCSGYLADCPGSDSSSNSSGQCRCSSSDSVVDCTEVSNQGVYGSCSTFRSSLSSDYDPFIYRSRGPAVHLEGSPPPEELPAGHSQSAGRGEPWLGPASPSGDQLSTCSLEMNYSSNSSLEPRGPNSSTSEVGLEVSPGAALDLRRTWKGGPEGPSCACCFEPQPFPPGSGIETSAGGSSLFLGPRLLEDCNPPSGEPQLGSSQGLYGLHSDHYPRTDGVKYEGLPCCFYEEKQVAHSAGRGNGCYTEDYSVSVQYTLTEEPPPSCYAGPRDLSQRIPIIPEDVDCDLGLPQDCHGMHNHSPWGGALSLDVPRLHWSLGTTREEEQAPCYQAEVQPGCSPEEAGASRASLSSAPQDTQESHALAAEASGPGSGPGIGTGA.

A disordered region spans residues 1–32 (MRPRSGGRPGAPGRRRRRLRRGPRGRRLPPPP). Residues 1 to 52 (MRPRSGGRPGAPGRRRRRLRRGPRGRRLPPPPPLPLLLGLLLAAAGPGAARA) form the signal peptide. A compositionally biased stretch (basic residues) spans 13 to 27 (GRRRRRLRRGPRGRR). Over 53–216 (KETAFVEVVL…PRQPTEYFDM (164 aa)) the chain is Extracellular. A helical membrane pass occupies residues 217-237 (GIFLAFFVVVSLVCLILLVKI). Residues 238-913 (KLKQRRSQNS…GSGPGIGTGA (676 aa)) are Cytoplasmic-facing. The RING-type; atypical zinc finger occupies 290-331 (CAICLEKYIDGEELRVIPCTHRFHRKCVDPWLLQHHTCPHCR). Disordered stretches follow at residues 601 to 669 (AVHL…GLEV) and 855 to 913 (REEE…GTGA). 2 stretches are compositionally biased toward polar residues: residues 634-664 (SGDQ…STSE) and 881-890 (ASLSSAPQDT). Residues 903–913 (PGSGPGIGTGA) show a composition bias toward gly residues.

Belongs to the ZNRF3 family. As to quaternary structure, interacts with LRP6, FZD4, FZD5, FZD6 and FZD8. Interacts with RSPO1; interaction promotes indirect interaction with LGR4 and membrane clearance of ZNRF3. Interacts with LMBR1L.

It is found in the cell membrane. The enzyme catalyses S-ubiquitinyl-[E2 ubiquitin-conjugating enzyme]-L-cysteine + [acceptor protein]-L-lysine = [E2 ubiquitin-conjugating enzyme]-L-cysteine + N(6)-ubiquitinyl-[acceptor protein]-L-lysine.. It functions in the pathway protein modification; protein ubiquitination. With respect to regulation, negatively regulated by R-spondin proteins such as RSPO1: interaction with RSPO1 induces the indirect association between ZNRF3 and LGR4, promoting membrane clearance of ZNRF3. In terms of biological role, E3 ubiquitin-protein ligase that acts as a negative regulator of the Wnt signaling pathway by mediating the ubiquitination and subsequent degradation of Wnt receptor complex components Frizzled and LRP6. Acts on both canonical and non-canonical Wnt signaling pathway. Acts as a tumor suppressor in the intestinal stem cell zone by inhibiting the Wnt signaling pathway, thereby restricting the size of the intestinal stem cell zone. Along with RSPO2 and RNF43, constitutes a master switch that governs limb specification. This is E3 ubiquitin-protein ligase ZNRF3 (Znrf3) from Mus musculus (Mouse).